Consider the following 235-residue polypeptide: Phosphoribosylaminoimidazole-succinocarboxamide synthase (235 aa).

Belongs to the SAICAR synthetase family.

The enzyme catalyses 5-amino-1-(5-phospho-D-ribosyl)imidazole-4-carboxylate + L-aspartate + ATP = (2S)-2-[5-amino-1-(5-phospho-beta-D-ribosyl)imidazole-4-carboxamido]succinate + ADP + phosphate + 2 H(+). It functions in the pathway purine metabolism; IMP biosynthesis via de novo pathway; 5-amino-1-(5-phospho-D-ribosyl)imidazole-4-carboxamide from 5-amino-1-(5-phospho-D-ribosyl)imidazole-4-carboxylate: step 1/2. This Clostridium beijerinckii (strain ATCC 51743 / NCIMB 8052) (Clostridium acetobutylicum) protein is Phosphoribosylaminoimidazole-succinocarboxamide synthase.